Consider the following 161-residue polypeptide: Probable ubiquitin-conjugating enzyme E2 16 (161 aa).

Positions 15–161 (IATNRLQKEL…TRWWFHDDKV (147 aa)) constitute a UBC core domain. Catalysis depends on Cys99, which acts as the Glycyl thioester intermediate.

The protein belongs to the ubiquitin-conjugating enzyme family.

It catalyses the reaction S-ubiquitinyl-[E1 ubiquitin-activating enzyme]-L-cysteine + [E2 ubiquitin-conjugating enzyme]-L-cysteine = [E1 ubiquitin-activating enzyme]-L-cysteine + S-ubiquitinyl-[E2 ubiquitin-conjugating enzyme]-L-cysteine.. It participates in protein modification; protein ubiquitination. Accepts the ubiquitin from the E1 complex and catalyzes its covalent attachment to other proteins. This is Probable ubiquitin-conjugating enzyme E2 16 (UBC16) from Arabidopsis thaliana (Mouse-ear cress).